The chain runs to 488 residues: N-succinylglutamate 5-semialdehyde dehydrogenase (488 aa).

Gly-221–Gly-226 is a binding site for NAD(+). Catalysis depends on residues Glu-244 and Cys-278.

The protein belongs to the aldehyde dehydrogenase family. AstD subfamily.

It catalyses the reaction N-succinyl-L-glutamate 5-semialdehyde + NAD(+) + H2O = N-succinyl-L-glutamate + NADH + 2 H(+). It participates in amino-acid degradation; L-arginine degradation via AST pathway; L-glutamate and succinate from L-arginine: step 4/5. In terms of biological role, catalyzes the NAD-dependent reduction of succinylglutamate semialdehyde into succinylglutamate. This chain is N-succinylglutamate 5-semialdehyde dehydrogenase, found in Pseudomonas savastanoi pv. phaseolicola (strain 1448A / Race 6) (Pseudomonas syringae pv. phaseolicola (strain 1448A / Race 6)).